A 320-amino-acid chain; its full sequence is RNA polymerase sigma factor SigA2 (320 aa).

A sigma-70 factor domain-2 region spans residues methionine 89 to threonine 159. Residues aspartate 113–glutamine 116 carry the Interaction with polymerase core subunit RpoC motif. The sigma-70 factor domain-3 stretch occupies residues glutamate 168–tyrosine 243. The segment at leucine 256–arginine 310 is sigma-70 factor domain-4. The segment at residues leucine 282–arginine 301 is a DNA-binding region (H-T-H motif).

This sequence belongs to the sigma-70 factor family.

The protein resides in the cytoplasm. Sigma factors are initiation factors that promote the attachment of RNA polymerase to specific initiation sites and are then released. This sigma factor is a component of the biological clock pathway that affects the circadian expression of a subset of genes in this bacterium. This chain is RNA polymerase sigma factor SigA2 (sigA2), found in Synechococcus elongatus (strain ATCC 33912 / PCC 7942 / FACHB-805) (Anacystis nidulans R2).